The primary structure comprises 458 residues: ATP synthase subunit beta (458 aa).

148–155 (GGAGVGKT) lines the ATP pocket.

The protein belongs to the ATPase alpha/beta chains family. As to quaternary structure, F-type ATPases have 2 components, CF(1) - the catalytic core - and CF(0) - the membrane proton channel. CF(1) has five subunits: alpha(3), beta(3), gamma(1), delta(1), epsilon(1). CF(0) has three main subunits: a(1), b(2) and c(9-12). The alpha and beta chains form an alternating ring which encloses part of the gamma chain. CF(1) is attached to CF(0) by a central stalk formed by the gamma and epsilon chains, while a peripheral stalk is formed by the delta and b chains.

The protein resides in the cell inner membrane. The catalysed reaction is ATP + H2O + 4 H(+)(in) = ADP + phosphate + 5 H(+)(out). Its function is as follows. Produces ATP from ADP in the presence of a proton gradient across the membrane. The catalytic sites are hosted primarily by the beta subunits. This chain is ATP synthase subunit beta, found in Shewanella woodyi (strain ATCC 51908 / MS32).